A 114-amino-acid polypeptide reads, in one-letter code: uncharacterized protein (114 aa).

This is an uncharacterized protein from Archaeoglobus fulgidus (strain ATCC 49558 / DSM 4304 / JCM 9628 / NBRC 100126 / VC-16).